The sequence spans 690 residues: MEGFNPADIEHASPINSSDSHSSSFVYALPKSASEYVVNHNEGRASASGNPAAVPSPIMTLNLKSTHSLNIDQHVHTSTSPTETIGHIHHVEKLNQNNLIHLDPVPNFEDKSDIKPWLQKIFYPQGIELVIERSDAFKVVFKCKAAKRGRNARRKRKDKPKGQDHEDEKSKINDDELEYASPSNATVTNGPQTSPDQTSSIKPKKKRCVSRFNNCPFRVRATYSLKRKRWSIVVMDNNHSHQLKFNPDSEEYKKFKEKLRKDNDVDAIKKFDELEYRTLANLPIPTATIPCDCGLTNEIQSFNVVLPTNSNVTSSASSSTVSSISLDSSNASKRPCLPSVNNTGSINTNNVRKPKSQCKNKDTLLKRTTMQNFLTTKSRLRKTGTPTSSQHSSTAFSGYIDDPFNLNEILPLPASDFKLNTVTNLNEIDFTNIFTKSPHPHSGSTHPRQVFDQLDDCSSILFSPLTTNTNNEFEGESDDFVHSPYLNSEADFSQILSSAPPVHHDPNETHQENQDIIDRFANSSQEHNEYILQYLTHSDAANHNNIGVPNNNSHSLNTQHNVSDLGNSLLRQEALVGSSSTKIFDELKFVQNGPHGSQHPIDFQHVDHRHLSSNEPQVRSHQYGPQQQPPQQLQYHQNQPHDGHNHEQHQTVQKDMQTHESLEIMGNTLLEEFKDIKMVNGELKYVKPED.

The disordered stretch occupies residues 1-21 (MEGFNPADIEHASPINSSDSH). Position 110 (D110) interacts with Zn(2+). DNA is bound by residues K111, K115, I131, E132, R133, S134, D135, and K138. C143 provides a ligand contact to Zn(2+). A compositionally biased stretch (basic residues) spans 148 to 159 (RGRNARRKRKDK). Residues 148–205 (RGRNARRKRKDKPKGQDHEDEKSKINDDELEYASPSNATVTNGPQTSPDQTSSIKPKK) form a disordered region. Residues 160–174 (PKGQDHEDEKSKIND) are compositionally biased toward basic and acidic residues. A compositionally biased stretch (polar residues) spans 181 to 201 (SPSNATVTNGPQTSPDQTSSI). A Zn(2+)-binding site is contributed by C215. Residue K226 coordinates DNA. H239 and H241 together coordinate Zn(2+). N263 lines the DNA pocket. A CDC [2Fe-2S] cluster binding motif motif is present at residues 291–293 (CDC). 2 disordered regions span residues 335–357 (PCLP…PKSQ) and 612–655 (SSNE…VQKD). Polar residues predominate over residues 339-351 (SVNNTGSINTNNV). Residues 621 to 638 (HQYGPQQQPPQQLQYHQN) show a composition bias toward low complexity. A compositionally biased stretch (basic and acidic residues) spans 639-649 (QPHDGHNHEQH).

Homodimer. Dimerization decreases the DNA-binding activity.

Its subcellular location is the nucleus. With respect to regulation, dimerization via the binding of Fe(2+) or a [2Fe-2S] cluster decreases the DNA-binding activity. Its function is as follows. Transcription factor that activates the genes for FRE1, FRE2 and FET3 in response to iron deprivationand thereby plays a central role in iron homeostasis. Also required for the expression of LSO1. Recognizes the consensus iron-responsive element (Fe-RE) sequence 5'-CACCC-3' in the promoters of target genes. Iron could interact directly with AFT1 and inhibits its activity. In high iron condition, the presence of Fe(2+) or [2Fe-2S] cluster leads to dimerization, which in turn leads to a decrease in DNA affinity. The sequence is that of Iron-regulated transcriptional activator AFT1 from Saccharomyces cerevisiae (strain ATCC 204508 / S288c) (Baker's yeast).